Here is a 1386-residue protein sequence, read N- to C-terminus: Adhesin AWP3b (1386 aa).

The first 19 residues, 1–19 (MISFVTLLAILGLLSISWA), serve as a signal peptide directing secretion. Cystine bridges form between C115/C145, C144/C178, and C304/C341. N-linked (GlcNAc...) asparagine glycosylation is present at N117. 4 N-linked (GlcNAc...) asparagine glycosylation sites follow: N315, N345, N468, and N526. The disordered stretch occupies residues 429–507 (TTDSPGHTIT…SSPTSDFSSV (79 aa)). 2 disordered regions span residues 530–553 (IVDS…SSSM) and 612–690 (TTDS…FSSV). Residues N651 and N709 are each glycosylated (N-linked (GlcNAc...) asparagine). 2 disordered regions span residues 714 to 739 (VDSS…MSSS) and 795 to 873 (TTDS…FSSV). N-linked (GlcNAc...) asparagine glycans are attached at residues N834, N898, N1008, N1017, and N1096. The interval 1000 to 1032 (TIQESELSNTSRTTMTSNSSVSISSTSSRSSFS) is disordered. 2 stretches are compositionally biased toward polar residues: residues 1140–1150 (SHPVATNSGDK) and 1159–1177 (QVST…SSFD). Residues 1140–1186 (SHPVATNSGDKPTTPKRSEQVSTTMTSSGPTPDTSSFDTDGMSAYSR) are disordered. N-linked (GlcNAc...) asparagine glycosylation occurs at N1197. Residues 1198 to 1218 (KSSTSQLGNNKQTFSNLQLES) are compositionally biased toward polar residues. Residues 1198 to 1227 (KSSTSQLGNNKQTFSNLQLESTRPHSENEV) form a disordered region. The N-linked (GlcNAc...) asparagine glycan is linked to N1229. The segment covering 1241-1259 (STYGTNNVNPLSPTGSISI) has biased composition (polar residues). Residues 1241–1269 (STYGTNNVNPLSPTGSISIPLTEDGQGDN) form a disordered region. An N-linked (GlcNAc...) asparagine glycan is attached at N1287.

The protein resides in the secreted. It is found in the cell wall. May play a role in cell adhesion. This Candida glabrata (strain ATCC 2001 / BCRC 20586 / JCM 3761 / NBRC 0622 / NRRL Y-65 / CBS 138) (Yeast) protein is Adhesin AWP3b.